The chain runs to 354 residues: Uroporphyrinogen decarboxylase (354 aa).

Substrate contacts are provided by residues Arg25–Arg29, Asp75, Tyr152, Thr207, and His330.

It belongs to the uroporphyrinogen decarboxylase family. Homodimer.

It is found in the cytoplasm. The catalysed reaction is uroporphyrinogen III + 4 H(+) = coproporphyrinogen III + 4 CO2. It participates in porphyrin-containing compound metabolism; protoporphyrin-IX biosynthesis; coproporphyrinogen-III from 5-aminolevulinate: step 4/4. Functionally, catalyzes the decarboxylation of four acetate groups of uroporphyrinogen-III to yield coproporphyrinogen-III. This is Uroporphyrinogen decarboxylase from Xanthomonas oryzae pv. oryzae (strain PXO99A).